A 56-amino-acid chain; its full sequence is TauPI-stichotoxin-Hcr2c (56 aa).

Residues C4–C54 form the BPTI/Kunitz inhibitor domain. 3 disulfides stabilise this stretch: C4–C54, C13–C37, and C29–C50.

The protein belongs to the venom Kunitz-type family. Sea anemone type 2 potassium channel toxin subfamily.

It localises to the secreted. The protein resides in the nematocyst. This protease inhibitor shows two different activities, it inhibits both the capsaicin receptor TRPV1 and serine proteases. It partially (max 50%) and reversibly inhibits mammalian TRPV1, a non-selective cation channel expressed by sensory neurons of the pain pathway). The second activity is a weak inhibition of trypsin and chymotrypsin activity (Ki=0.9 uM and Ki=4.5 uM, respectively). In vivo, shows analgesic effects on mammals. The protein is TauPI-stichotoxin-Hcr2c of Radianthus crispa (Leathery sea anemone).